Consider the following 253-residue polypeptide: Triosephosphate isomerase (253 aa).

9–11 (NWK) contacts substrate. His96 acts as the Electrophile in catalysis. Glu168 serves as the catalytic Proton acceptor. Substrate is bound by residues Gly174, Ser213, and 234–235 (GG).

The protein belongs to the triosephosphate isomerase family. As to quaternary structure, homodimer.

The protein localises to the cytoplasm. The enzyme catalyses D-glyceraldehyde 3-phosphate = dihydroxyacetone phosphate. Its pathway is carbohydrate biosynthesis; gluconeogenesis. The protein operates within carbohydrate degradation; glycolysis; D-glyceraldehyde 3-phosphate from glycerone phosphate: step 1/1. Involved in the gluconeogenesis. Catalyzes stereospecifically the conversion of dihydroxyacetone phosphate (DHAP) to D-glyceraldehyde-3-phosphate (G3P). This is Triosephosphate isomerase from Hydrogenovibrio crunogenus (strain DSM 25203 / XCL-2) (Thiomicrospira crunogena).